The following is a 403-amino-acid chain: Vacuole membrane protein 1 homolog (403 aa).

The stretch at Ile7–Lys33 forms a coiled coil. 8 consecutive transmembrane segments (helical) span residues Phe65–Gly85, Ile102–Phe122, Ala150–Leu170, Trp175–Ala195, Leu240–Phe260, Ala263–Ile283, Ala294–Glu314, and Val348–Val368.

Belongs to the VMP1 family.

The protein resides in the membrane. It is found in the endoplasmic reticulum. It catalyses the reaction a 1,2-diacyl-sn-glycero-3-phospho-L-serine(in) = a 1,2-diacyl-sn-glycero-3-phospho-L-serine(out). It carries out the reaction cholesterol(in) = cholesterol(out). The catalysed reaction is a 1,2-diacyl-sn-glycero-3-phosphocholine(in) = a 1,2-diacyl-sn-glycero-3-phosphocholine(out). The enzyme catalyses a 1,2-diacyl-sn-glycero-3-phosphoethanolamine(in) = a 1,2-diacyl-sn-glycero-3-phosphoethanolamine(out). In terms of biological role, phospholipid scramblase involved in lipid homeostasis and membrane dynamics processes. Required for autophagosome formation: participates in early stages of autophagosome biogenesis at the endoplasmic reticulum (ER) membrane by reequilibrating the leaflets of the ER as lipids are extracted. In addition to autophagy, involved in other processes in which phospholipid scramblase activity is required. The protein is Vacuole membrane protein 1 homolog of Dictyostelium discoideum (Social amoeba).